Here is a 210-residue protein sequence, read N- to C-terminus: Putative protein-lysine deacylase ABHD14B (210 aa).

Ser-91 bears the Phosphoserine mark. Residues Ser-111, Asp-162, and His-188 each act as charge relay system in the active site.

Belongs to the AB hydrolase superfamily. ABHD14 family. In terms of assembly, may interact with TAF1.

Its subcellular location is the cytoplasm. The protein localises to the nucleus. The enzyme catalyses L-lysyl-[protein] + acetyl-CoA = N(6)-acetyl-L-lysyl-[protein] + CoA + H(+). Functionally, acts as an atypical protein-lysine deacetylase in vitro. Catalyzes the deacetylation of lysine residues using CoA as substrate, generating acetyl-CoA and the free amine of protein-lysine residues. Additional experiments are however required to confirm the protein-lysine deacetylase activity in vivo. Has hydrolase activity towards various surrogate p-nitrophenyl (pNp) substrates, such as pNp-butyrate, pNp-acetate and pNp-octanoate in vitro, with a strong preference for pNp-acetate. May activate transcription. The protein is Putative protein-lysine deacylase ABHD14B of Rattus norvegicus (Rat).